Reading from the N-terminus, the 174-residue chain is Ribosome maturation factor RimM (174 aa).

The region spanning 96 to 169 (KDTFFICDLI…KMVVDLPQGL (74 aa)) is the PRC barrel domain.

This sequence belongs to the RimM family. Binds ribosomal protein uS19.

It localises to the cytoplasm. Functionally, an accessory protein needed during the final step in the assembly of 30S ribosomal subunit, possibly for assembly of the head region. Essential for efficient processing of 16S rRNA. May be needed both before and after RbfA during the maturation of 16S rRNA. It has affinity for free ribosomal 30S subunits but not for 70S ribosomes. The sequence is that of Ribosome maturation factor RimM from Acetivibrio thermocellus (strain ATCC 27405 / DSM 1237 / JCM 9322 / NBRC 103400 / NCIMB 10682 / NRRL B-4536 / VPI 7372) (Clostridium thermocellum).